The primary structure comprises 31 residues: Cytochrome b6-f complex subunit 6 (31 aa).

A helical transmembrane segment spans residues 3–23 (ILINYFLLVGFCFALASGLFL).

It belongs to the PetL family. As to quaternary structure, the 4 large subunits of the cytochrome b6-f complex are cytochrome b6, subunit IV (17 kDa polypeptide, PetD), cytochrome f and the Rieske protein, while the 4 small subunits are PetG, PetL, PetM and PetN. The complex functions as a dimer.

It is found in the plastid. The protein localises to the chloroplast thylakoid membrane. Its function is as follows. Component of the cytochrome b6-f complex, which mediates electron transfer between photosystem II (PSII) and photosystem I (PSI), cyclic electron flow around PSI, and state transitions. PetL is important for photoautotrophic growth as well as for electron transfer efficiency and stability of the cytochrome b6-f complex. In Thalassiosira pseudonana (Marine diatom), this protein is Cytochrome b6-f complex subunit 6.